The sequence spans 372 residues: Lectin/endochitinase 1 (372 aa).

The N-terminal stretch at 1–23 (MMMRFLSAVVIMSSAMAVGLVSA) is a signal peptide. Gln24 is a substrate binding site. Gln24 carries the pyrrolidone carboxylic acid modification. Chitin-binding type-1 domains follow at residues 24 to 64 (QRCG…KCWS) and 69 to 111 (DHRC…RCSS). 4 cysteine pairs are disulfide-bonded: Cys26/Cys41, Cys35/Cys47, Cys40/Cys54, and Cys58/Cys62. 42 to 53 (SIWGWCGDSEPY) contacts substrate. A Zn(2+)-binding site is contributed by His70. Intrachain disulfides connect Cys72/Cys87, Cys81/Cys93, Cys86/Cys100, and Cys105/Cys109. His90 lines the Zn(2+) pocket. The spacer stretch occupies residues 113 to 128 (VRGPRVALSGNSTANS). Asn123 is a glycosylation site (N-linked (GlcNAc...) asparagine). Residues 129 to 372 (IGNVVVTEPL…FQRIQMRVAA (244 aa)) form a chitinase region.

As to quaternary structure, monomer and homodimer. Zinc favors dimerization. Active in the monomeric form but probably inactive in the dimeric form. The interaction with glycans on the mammalian TCR and MHC molecules of the T-cell and antigen-presenting cell, respectively, is inhibited by oligomers of GlcNAc. Proteolytically processed to yield a very small protein (8.5 kDa, 86 AA) containing only the two chitin-binding domains. Rhizomes and inflorescence with immature seeds.

It carries out the reaction Random endo-hydrolysis of N-acetyl-beta-D-glucosaminide (1-&gt;4)-beta-linkages in chitin and chitodextrins.. Its function is as follows. Functions both as a chitinase and as a N-acetyl-D-glucosamine binding lectin. Inhibits the growth of several phytopathogenic chitin-containing fungi. Also possesses insecticidal activity and superantigenic properties. The polypeptide is Lectin/endochitinase 1 (UDA1) (Urtica dioica (Great nettle)).